Reading from the N-terminus, the 338-residue chain is Large ribosomal subunit protein uL10 (338 aa).

Residues 292-338 (LDDDLKERVSSTASAVEAKEEEAPKEEKEEEKEEEEEAPAAGLGMLF) form a disordered region. Basic and acidic residues predominate over residues 308 to 318 (EAKEEEAPKEE). A compositionally biased stretch (acidic residues) spans 319–329 (KEEEKEEEEEA).

It belongs to the universal ribosomal protein uL10 family. In terms of assembly, part of the 50S ribosomal subunit. Forms part of the ribosomal stalk which helps the ribosome interact with GTP-bound translation factors. Forms a heptameric L10(L12)2(L12)2(L12)2 complex, where L10 forms an elongated spine to which the L12 dimers bind in a sequential fashion.

In terms of biological role, forms part of the ribosomal stalk, playing a central role in the interaction of the ribosome with GTP-bound translation factors. This chain is Large ribosomal subunit protein uL10, found in Methanococcus aeolicus (strain ATCC BAA-1280 / DSM 17508 / OCM 812 / Nankai-3).